The sequence spans 107 residues: MAESHRLYVKGKHLSYQRSKRVNNPNVSLIKIEGVATPQEAQFYLGKRIAYVYRASKEVRGSKIRVMWGKVTRTHGNSGVVRATFRNNLPAKTFGASVRIFLYPSNI.

Position 2 is an N-acetylalanine; partial (Ala2). Lys47 participates in a covalent cross-link: Glycyl lysine isopeptide (Lys-Gly) (interchain with G-Cter in ubiquitin).

Belongs to the eukaryotic ribosomal protein eL33 family. In terms of assembly, component of the large ribosomal subunit (LSU). Mature yeast ribosomes consist of a small (40S) and a large (60S) subunit. The 40S small subunit contains 1 molecule of ribosomal RNA (18S rRNA) and 33 different proteins (encoded by 57 genes). The large 60S subunit contains 3 rRNA molecules (25S, 5.8S and 5S rRNA) and 46 different proteins (encoded by 81 genes). Post-translationally, N-terminally acetylated by acetyltransferase NatA.

It localises to the cytoplasm. Component of the ribosome, a large ribonucleoprotein complex responsible for the synthesis of proteins in the cell. The small ribosomal subunit (SSU) binds messenger RNAs (mRNAs) and translates the encoded message by selecting cognate aminoacyl-transfer RNA (tRNA) molecules. The large subunit (LSU) contains the ribosomal catalytic site termed the peptidyl transferase center (PTC), which catalyzes the formation of peptide bonds, thereby polymerizing the amino acids delivered by tRNAs into a polypeptide chain. The nascent polypeptides leave the ribosome through a tunnel in the LSU and interact with protein factors that function in enzymatic processing, targeting, and the membrane insertion of nascent chains at the exit of the ribosomal tunnel. The protein is Large ribosomal subunit protein eL33B of Saccharomyces cerevisiae (strain ATCC 204508 / S288c) (Baker's yeast).